A 140-amino-acid polypeptide reads, in one-letter code: Prepilin peptidase-dependent protein A (140 aa).

The propeptide occupies 1–23 (MLLLKASAICGKGNEGKRNKKGG). Phenylalanine 24 carries the N-methylphenylalanine modification. The chain crosses the membrane as a helical span at residues 24-44 (FTLIELTVVLAIMAIILMVIA).

It is found in the membrane. Not yet known. The polypeptide is Prepilin peptidase-dependent protein A (ppdA) (Clostridium perfringens (strain 13 / Type A)).